A 173-amino-acid chain; its full sequence is Photosystem I assembly protein Ycf3 (173 aa).

TPR repeat units follow at residues 35–68, 72–105, and 120–153; these read AYIY…EENA, GETL…NPKQ, and GRAL…YPGG.

It belongs to the Ycf3 family.

It is found in the cellular thylakoid membrane. Essential for the assembly of the photosystem I (PSI) complex. May act as a chaperone-like factor to guide the assembly of the PSI subunits. The protein is Photosystem I assembly protein Ycf3 of Prochlorococcus marinus (strain SARG / CCMP1375 / SS120).